Reading from the N-terminus, the 428-residue chain is Tyrosine--tRNA ligase (428 aa).

Y36 is a binding site for L-tyrosine. The short motif at 41-50 (PTARSLHIGS) is the 'HIGH' region element. L-tyrosine-binding residues include Y169 and Q173. Residues 229-233 (KMGKT) carry the 'KMSKS' region motif. An ATP-binding site is contributed by K232. In terms of domain architecture, S4 RNA-binding spans 361 to 427 (IPAYEIMHEC…GKKKYMIIKV (67 aa)).

Belongs to the class-I aminoacyl-tRNA synthetase family. TyrS type 1 subfamily. As to quaternary structure, homodimer.

The protein resides in the cytoplasm. The enzyme catalyses tRNA(Tyr) + L-tyrosine + ATP = L-tyrosyl-tRNA(Tyr) + AMP + diphosphate + H(+). Catalyzes the attachment of tyrosine to tRNA(Tyr) in a two-step reaction: tyrosine is first activated by ATP to form Tyr-AMP and then transferred to the acceptor end of tRNA(Tyr). The protein is Tyrosine--tRNA ligase of Syntrophus aciditrophicus (strain SB).